Here is a 124-residue protein sequence, read N- to C-terminus: Small ribosomal subunit protein uS12 (124 aa).

The interval M1–Q29 is disordered. D90 is modified (3-methylthioaspartic acid).

It belongs to the universal ribosomal protein uS12 family. As to quaternary structure, part of the 30S ribosomal subunit. Contacts proteins S8 and S17. May interact with IF1 in the 30S initiation complex.

Functionally, with S4 and S5 plays an important role in translational accuracy. In terms of biological role, interacts with and stabilizes bases of the 16S rRNA that are involved in tRNA selection in the A site and with the mRNA backbone. Located at the interface of the 30S and 50S subunits, it traverses the body of the 30S subunit contacting proteins on the other side and probably holding the rRNA structure together. The combined cluster of proteins S8, S12 and S17 appears to hold together the shoulder and platform of the 30S subunit. In Anaplasma marginale (strain Florida), this protein is Small ribosomal subunit protein uS12.